We begin with the raw amino-acid sequence, 293 residues long: Probable E3 ubiquitin-protein ligase RNF144A-A (293 aa).

A TRIAD supradomain region spans residues Pro16 to Leu237. Residues Cys20, Cys23, Cys43, Cys46, Cys111, Cys116, Cys135, Cys138, Cys143, Cys146, His151, Cys156, Cys186, and Cys189 each contribute to the Zn(2+) site. An RING-type 1 zinc finger spans residues Cys20–Cys70. Residues Gln91 to Cys156 form an IBR-type zinc finger. An RING-type 2; atypical zinc finger spans residues Cys186–Cys215. The active site involves Cys199. Positions 204, 207, 212, 215, 227, and 233 each coordinate Zn(2+). The helical transmembrane segment at Val251–Leu271 threads the bilayer.

The protein belongs to the RBR family. RNF144 subfamily.

It is found in the membrane. It catalyses the reaction [E2 ubiquitin-conjugating enzyme]-S-ubiquitinyl-L-cysteine + [acceptor protein]-L-lysine = [E2 ubiquitin-conjugating enzyme]-L-cysteine + [acceptor protein]-N(6)-ubiquitinyl-L-lysine.. It functions in the pathway protein modification; protein ubiquitination. Functionally, E3 ubiquitin-protein ligase which accepts ubiquitin from E2 ubiquitin-conjugating enzymes ube2l3 and ube2l6 in the form of a thioester and then directly transfers the ubiquitin to targeted substrates. The polypeptide is Probable E3 ubiquitin-protein ligase RNF144A-A (rnf144aa) (Danio rerio (Zebrafish)).